The sequence spans 312 residues: Porphobilinogen deaminase (312 aa).

At C241 the chain carries S-(dipyrrolylmethanemethyl)cysteine.

This sequence belongs to the HMBS family. Monomer. Requires dipyrromethane as cofactor.

The catalysed reaction is 4 porphobilinogen + H2O = hydroxymethylbilane + 4 NH4(+). It participates in porphyrin-containing compound metabolism; protoporphyrin-IX biosynthesis; coproporphyrinogen-III from 5-aminolevulinate: step 2/4. In terms of biological role, tetrapolymerization of the monopyrrole PBG into the hydroxymethylbilane pre-uroporphyrinogen in several discrete steps. This Cytophaga hutchinsonii (strain ATCC 33406 / DSM 1761 / CIP 103989 / NBRC 15051 / NCIMB 9469 / D465) protein is Porphobilinogen deaminase.